A 504-amino-acid chain; its full sequence is MSQYVIAIDQGTTSSRAIIFDHDGNIVSTGQLEHEQIFPKAGWVEHNATEIWNNTREVIGTALSKANLTRHDIAAVGITNQRETAVVWDKTTGEPVYNAIVWQDTRTQSIVDELAVGGGVERFKDKVGLPLATYFSGTKIKWILDNVDGARERAAAGDLLFGNTDSWVTWNLTGGVDGGVHITDVTNASRTMFMDLATLSWDQEILDAFGVPASMLPTIKSSSEVYGTVHTSQLLREVPVAGILGDQQAATFGQAAFNTGEAKNTYGTGCFLIFNTGEEIVHSKNGLLTTVGYKLGDAPTHYALEGSIAVAGSLIQWLRDTLGMISSAPEVEELAASVEDNGGVYIVPAFSGLFAPYWRSDARGAIVGMTRYVNRNHIARAALEATAFQTREVLDAVNADSGVPLTELKVDGGMVANDALMQFQADILGVPVIRPKVTETTALGAAYAAGLAVGFWNDLGELSSNWAEDKRWEPAMEEDERARQLRLWKKAVTKSMDWVDEDVR.

Threonine 12 provides a ligand contact to ADP. 3 residues coordinate ATP: threonine 12, threonine 13, and serine 14. Residue threonine 12 coordinates sn-glycerol 3-phosphate. An ADP-binding site is contributed by arginine 16. Residues arginine 82, glutamate 83, tyrosine 134, and aspartate 246 each coordinate sn-glycerol 3-phosphate. Glycerol is bound by residues arginine 82, glutamate 83, tyrosine 134, aspartate 246, and glutamine 247. Threonine 268 and glycine 312 together coordinate ADP. 4 residues coordinate ATP: threonine 268, glycine 312, glutamine 316, and glycine 413. Residues glycine 413 and asparagine 417 each contribute to the ADP site.

It belongs to the FGGY kinase family.

The catalysed reaction is glycerol + ATP = sn-glycerol 3-phosphate + ADP + H(+). It participates in polyol metabolism; glycerol degradation via glycerol kinase pathway; sn-glycerol 3-phosphate from glycerol: step 1/1. Inhibited by fructose 1,6-bisphosphate (FBP). Functionally, key enzyme in the regulation of glycerol uptake and metabolism. Catalyzes the phosphorylation of glycerol to yield sn-glycerol 3-phosphate. The protein is Glycerol kinase of Renibacterium salmoninarum (strain ATCC 33209 / DSM 20767 / JCM 11484 / NBRC 15589 / NCIMB 2235).